Reading from the N-terminus, the 312-residue chain is Transcriptional regulator protein Pur-beta (312 aa).

The tract at residues 1-32 (MADGDSGSERGGGGGPCGFQPASRGGGEQETQ) is disordered. Ala-2 carries the post-translational modification N-acetylalanine. Residues Ser-6 and Ser-8 each carry the phosphoserine modification. Arg-24 is modified (omega-N-methylarginine). The segment at 28–254 (EQETQELASK…LRVSEVKPSY (227 aa)) is DNA-binding. Residue Thr-31 is modified to Phosphothreonine. Position 101 is a phosphoserine (Ser-101). An Omega-N-methylarginine modification is found at Arg-152. At Lys-267 the chain carries N6-acetyllysine. Residues 284-295 (ERQRDKLYERRG) are compositionally biased toward basic and acidic residues. Residues 284 to 312 (ERQRDKLYERRGGGSGGGEESEGEEVDED) are disordered. Position 294 is an omega-N-methylarginine (Arg-294). Phosphoserine is present on residues Ser-298 and Ser-304. Positions 302–312 (EESEGEEVDED) are enriched in acidic residues.

It belongs to the PUR DNA-binding protein family. Homodimer, heterodimer with PURA and heterotrimer with PURA and YBX1/Y-box protein 1. Interacts with MYOCD and SRF. Expressed in myocardium of heart failure patients.

The protein resides in the nucleus. Functionally, transcriptional regulator which can act as an activator or a repressor. Represses the transcription of ACTA2 in fibroblasts and smooth muscle cells via its ability to interact with the purine-rich strand of a MCAT- containing element in the 5' flanking region of the gene. Represses the transcription of MYOCD, capable of repressing all isoforms of MYOCD but the magnitude of the repressive effects is most notable for the SMC- specific isoforms. Promotes hepatic glucose production by activating the transcription of ADCY6, leading to cAMP accumulation, increased PKA activity, CREB activation, and increased transcription of PCK1 and G6PC genes. Has capacity to bind repeated elements in single-stranded DNA such as the purine-rich single strand of the PUR element located upstream of the MYC gene. Participates in transcriptional and translational regulation of alpha-MHC expression in cardiac myocytes by binding to the purine-rich negative regulatory (PNR) element Modulates constitutive liver galectin-3 gene transcription by binding to its promoter. May play a role in the dendritic transport of a subset of mRNAs. The sequence is that of Transcriptional regulator protein Pur-beta (PURB) from Homo sapiens (Human).